A 201-amino-acid polypeptide reads, in one-letter code: Pyrrolidone-carboxylate peptidase (201 aa).

Active-site residues include Glu-78, Cys-141, and His-165.

It belongs to the peptidase C15 family. In terms of assembly, homotetramer.

Its subcellular location is the cytoplasm. It catalyses the reaction Release of an N-terminal pyroglutamyl group from a polypeptide, the second amino acid generally not being Pro.. Functionally, removes 5-oxoproline from various penultimate amino acid residues except L-proline. The chain is Pyrrolidone-carboxylate peptidase from Brachyspira hyodysenteriae (strain ATCC 49526 / WA1).